Reading from the N-terminus, the 406-residue chain is UPF0754 membrane protein CYB_2931 (406 aa).

The next 2 membrane-spanning stretches (helical) occupy residues 1-21 (MAFWIYVVPPLAGLVIGYFTN) and 385-405 (IVNLGGLLGFLVGCVQVLFLL).

This sequence belongs to the UPF0754 family.

The protein localises to the cell inner membrane. In Synechococcus sp. (strain JA-2-3B'a(2-13)) (Cyanobacteria bacterium Yellowstone B-Prime), this protein is UPF0754 membrane protein CYB_2931.